Reading from the N-terminus, the 424-residue chain is Glutamate-1-semialdehyde 2,1-aminomutase (424 aa).

Lys263 carries the N6-(pyridoxal phosphate)lysine modification.

Belongs to the class-III pyridoxal-phosphate-dependent aminotransferase family. HemL subfamily. Homodimer. Pyridoxal 5'-phosphate is required as a cofactor.

The protein resides in the cytoplasm. The enzyme catalyses (S)-4-amino-5-oxopentanoate = 5-aminolevulinate. The protein operates within porphyrin-containing compound metabolism; protoporphyrin-IX biosynthesis; 5-aminolevulinate from L-glutamyl-tRNA(Glu): step 2/2. This Campylobacter jejuni subsp. jejuni serotype O:2 (strain ATCC 700819 / NCTC 11168) protein is Glutamate-1-semialdehyde 2,1-aminomutase.